A 649-amino-acid chain; its full sequence is MFSVTRRRAAGAAAAMATATGTLYWMTSQGDRPLVHNDPSYMVQFPTAAPPQVSRRDLLDRLAKTHQFDVLIIGGGATGTGCALDAATRGLNVALVEKGDFASGTSSKSTKMIHGGVRYLEKAFWEFSKAQLDLVIEALNERKHLINTAPHLCTVLPILIPIYSTWQVPYIYMGCKFYDFFAGSQNLKKSYLLSKSATVEKAPMLTTDNLKASLVYHDGSFNDSRLNATLAITAVENGATVLNYVEVQKLIKDPTSGKVIGAEARDVETNELVRINAKCVVNATGPYSDAILQMDRNPSGLPDSPLNDNSKIKSTFNQIAVMDPKMVIPSIGVHIVLPSFYCPKDMGLLDVRTSDGRVMFFLPWQGKVLAGTTDIPLKQVPENPMPTEADIQDILKELQHYIEFPVKREDVLSAWAGVRPLVRDPRTIPADGKKGSATQGVVRSHFLFTSDNGLITIAGGKWTTYRQMAEETVDKVVEVGGFHNLKPCHTRDIKLAGAEEWTQNYVALLAQNYHLSSKMSNYLVQNYGTRSSIICEFFKESMENKLPLSLADKENNVIYSSEENNLVNFDTFRYPFTIGELKYSMQYEYCRTPLDFLLRRTRFAFLDAKEALNAVHATVKVMGDEFNWSEKKRQWELEKTVNFIKTFGV.

Aspartate 69–glutamate 97 is a binding site for FAD.

Belongs to the FAD-dependent glycerol-3-phosphate dehydrogenase family. The cofactor is FAD.

It is found in the mitochondrion inner membrane. Its subcellular location is the mitochondrion intermembrane space. It catalyses the reaction a quinone + sn-glycerol 3-phosphate = dihydroxyacetone phosphate + a quinol. The protein operates within polyol metabolism; glycerol degradation via glycerol kinase pathway; glycerone phosphate from sn-glycerol 3-phosphate (anaerobic route): step 1/1. The protein is Glycerol-3-phosphate dehydrogenase, mitochondrial (GUT2) of Saccharomyces cerevisiae (strain ATCC 204508 / S288c) (Baker's yeast).